The chain runs to 379 residues: Tubby-like F-box protein 7 (379 aa).

The segment covering 18–28 (FHQGETTTAPE) has biased composition (polar residues). The interval 18–41 (FHQGETTTAPESESIPPPSNMAGS) is disordered. The 56-residue stretch at 42 to 97 (SSWSAMLPELLGEIIRRVEETEDRWPQRRDVVTCACVSKKWREITHDFARSSLNSG) folds into the F-box domain. Disordered regions lie at residues 193–212 (SQPPHNGAKPSNGKASRRFA) and 248–278 (TLRCPSPSPSSSSAGLSSDQKPCDVTKIMKK).

This sequence belongs to the TUB family. Ubiquitous.

The protein is Tubby-like F-box protein 7 of Arabidopsis thaliana (Mouse-ear cress).